A 184-amino-acid polypeptide reads, in one-letter code: NADH-quinone oxidoreductase subunit B (184 aa).

The [4Fe-4S] cluster site is built by cysteine 37, cysteine 38, cysteine 103, and cysteine 132.

It belongs to the complex I 20 kDa subunit family. As to quaternary structure, NDH-1 is composed of 14 different subunits. Subunits NuoB, C, D, E, F, and G constitute the peripheral sector of the complex. [4Fe-4S] cluster is required as a cofactor.

The protein resides in the cell membrane. It carries out the reaction a quinone + NADH + 5 H(+)(in) = a quinol + NAD(+) + 4 H(+)(out). Its function is as follows. NDH-1 shuttles electrons from NADH, via FMN and iron-sulfur (Fe-S) centers, to quinones in the respiratory chain. The immediate electron acceptor for the enzyme in this species is believed to be a menaquinone. Couples the redox reaction to proton translocation (for every two electrons transferred, four hydrogen ions are translocated across the cytoplasmic membrane), and thus conserves the redox energy in a proton gradient. This chain is NADH-quinone oxidoreductase subunit B, found in Mycolicibacterium smegmatis (strain ATCC 700084 / mc(2)155) (Mycobacterium smegmatis).